A 76-amino-acid chain; its full sequence is Sec-independent protein translocase protein TatA (76 aa).

A helical transmembrane segment spans residues 1–21 (MGGISIWQLLIIVAIIVLLFG). Residues 43–76 (MADDKSQPQDASFEKVEAKEAASTEQKAKEKEQA) form a disordered region.

This sequence belongs to the TatA/E family. In terms of assembly, the Tat system comprises two distinct complexes: a TatABC complex, containing multiple copies of TatA, TatB and TatC subunits, and a separate TatA complex, containing only TatA subunits. Substrates initially bind to the TatABC complex, which probably triggers association of the separate TatA complex to form the active translocon.

The protein resides in the cell inner membrane. Functionally, part of the twin-arginine translocation (Tat) system that transports large folded proteins containing a characteristic twin-arginine motif in their signal peptide across membranes. TatA could form the protein-conducting channel of the Tat system. The protein is Sec-independent protein translocase protein TatA of Actinobacillus pleuropneumoniae serotype 5b (strain L20).